The following is a 132-amino-acid chain: Ribonuclease P protein component (132 aa).

Belongs to the RnpA family. Consists of a catalytic RNA component (M1 or rnpB) and a protein subunit.

It carries out the reaction Endonucleolytic cleavage of RNA, removing 5'-extranucleotides from tRNA precursor.. Functionally, RNaseP catalyzes the removal of the 5'-leader sequence from pre-tRNA to produce the mature 5'-terminus. It can also cleave other RNA substrates such as 4.5S RNA. The protein component plays an auxiliary but essential role in vivo by binding to the 5'-leader sequence and broadening the substrate specificity of the ribozyme. This Marinobacter nauticus (strain ATCC 700491 / DSM 11845 / VT8) (Marinobacter aquaeolei) protein is Ribonuclease P protein component.